A 228-amino-acid polypeptide reads, in one-letter code: Thymidylate kinase (228 aa).

A compositionally biased stretch (polar residues) spans 1 to 10 (MSDSAVQRSS). The segment at 1-23 (MSDSAVQRSSGRGRFITFEGGEG) is disordered. Position 20–27 (20–27 (GGEGTGKS)) interacts with ATP.

Belongs to the thymidylate kinase family.

It catalyses the reaction dTMP + ATP = dTDP + ADP. Phosphorylation of dTMP to form dTDP in both de novo and salvage pathways of dTTP synthesis. This Bradyrhizobium diazoefficiens (strain JCM 10833 / BCRC 13528 / IAM 13628 / NBRC 14792 / USDA 110) protein is Thymidylate kinase.